The primary structure comprises 383 residues: tRNA (guanine(26)-N(2))-dimethyltransferase (383 aa).

Residues 4 to 371 (EIITEGRTPL…ASPEEFEAVL (368 aa)) form the Trm1 methyltransferase domain. The S-adenosyl-L-methionine site is built by Arg38, Arg63, Asp80, Asp108, and Ala109. Positions 243, 246, 258, and 261 each coordinate Zn(2+).

The protein belongs to the class I-like SAM-binding methyltransferase superfamily. Trm1 family.

It catalyses the reaction guanosine(26) in tRNA + 2 S-adenosyl-L-methionine = N(2)-dimethylguanosine(26) in tRNA + 2 S-adenosyl-L-homocysteine + 2 H(+). Its function is as follows. Dimethylates a single guanine residue at position 26 of a number of tRNAs using S-adenosyl-L-methionine as donor of the methyl groups. This chain is tRNA (guanine(26)-N(2))-dimethyltransferase, found in Methanopyrus kandleri (strain AV19 / DSM 6324 / JCM 9639 / NBRC 100938).